The chain runs to 855 residues: Protein KRI1 homolog (855 aa).

Disordered stretches follow at residues 47-67 (VSES…VDPK), 82-117 (KDPC…KAKP), 130-196 (EHNG…KTKE), 312-342 (SLRR…MKEL), 424-453 (YDPR…CDYD), and 589-855 (KSLY…KKDN). The segment covering 48 to 64 (SESEFDSDSSSSEEDEV) has biased composition (acidic residues). Residues 82-91 (KDPCIYDKGT) show a composition bias toward basic and acidic residues. Phosphoserine occurs at positions 95, 97, 98, 137, and 138. Residues 160–176 (EEERRLKAEFRKVMNKE) show a composition bias toward basic and acidic residues. At Ser-179 the chain carries Phosphoserine. Positions 307–362 (RTIEQSLRRTDDKRKEKRKELKERKDQEKQQKMKELELVKEMKRKEIDEKIRKLKA) form a coiled coil. Over residues 441–452 (CEDDDFNMDCDY) the composition is skewed to acidic residues. The span at 609-619 (VTPAEATAPAE) shows a compositional bias: low complexity. The segment covering 630 to 640 (KSKRKRLKRKA) has biased composition (basic residues). Composition is skewed to basic and acidic residues over residues 650-664 (VLKE…KEAD) and 674-692 (SSKK…DANQ). 3 stretches are compositionally biased toward polar residues: residues 720-748 (VQNG…TTES), 756-773 (SNGN…QQRQ), and 792-805 (ANGT…NQKP). The segment covering 812–826 (KKTNNFKAKNKQNNN) has biased composition (low complexity). Residues 842–855 (RKFHKREKYGKKDN) are compositionally biased toward basic residues.

Belongs to the KRI1 family.

In Drosophila melanogaster (Fruit fly), this protein is Protein KRI1 homolog.